Here is a 202-residue protein sequence, read N- to C-terminus: Protein Thf1 (202 aa).

The stretch at 174-202 forms a coiled coil; sequence IYKSSILKMEQAKELLQEAKIKDKKEKKK.

The protein belongs to the THF1 family.

Its function is as follows. May be involved in photosynthetic membrane biogenesis. This chain is Protein Thf1, found in Prochlorococcus marinus subsp. pastoris (strain CCMP1986 / NIES-2087 / MED4).